The chain runs to 92 residues: Small ribosomal subunit protein uS19c (92 aa).

This sequence belongs to the universal ribosomal protein uS19 family.

It localises to the plastid. The protein localises to the chloroplast. In terms of biological role, protein S19 forms a complex with S13 that binds strongly to the 16S ribosomal RNA. In Panax ginseng (Korean ginseng), this protein is Small ribosomal subunit protein uS19c.